The primary structure comprises 494 residues: PTS system cellobiose-specific EIIC component (494 aa).

Residues 8–481 (MEKYLVPVAA…IITFVIWVPF (474 aa)) form the PTS EIIC type-3 domain. The next 9 membrane-spanning stretches (helical) occupy residues 32 to 52 (FIGM…SAIV), 92 to 112 (ISAL…AFSW), 119 to 139 (AYGV…FAGL), 188 to 208 (AYFT…KLML), 227 to 247 (FLAI…YYII), 274 to 294 (IFSV…GLHG), 355 to 375 (AFAW…IILF), 406 to 426 (VVLN…SVII), and 463 to 483 (AIVL…PFVI).

The protein resides in the cell membrane. In terms of biological role, the phosphoenolpyruvate-dependent sugar phosphotransferase system (PTS), a major carbohydrate active transport system, catalyzes the phosphorylation of incoming sugar substrates concomitant with their translocation across the cell membrane. Involved in cellobiose transport with PtcA and PtcB. This system can also transport lactose. This chain is PTS system cellobiose-specific EIIC component, found in Lactococcus lactis subsp. lactis (strain IL1403) (Streptococcus lactis).